The following is a 91-amino-acid chain: RNA-binding protein Hfq (91 aa).

The Sm domain occupies 9-69 (DRFLNMLRTG…ISTIMPSSFV (61 aa)).

This sequence belongs to the Hfq family. As to quaternary structure, homohexamer.

In terms of biological role, RNA chaperone that binds small regulatory RNA (sRNAs) and mRNAs to facilitate mRNA translational regulation in response to envelope stress, environmental stress and changes in metabolite concentrations. Also binds with high specificity to tRNAs. The polypeptide is RNA-binding protein Hfq (Pseudothermotoga lettingae (strain ATCC BAA-301 / DSM 14385 / NBRC 107922 / TMO) (Thermotoga lettingae)).